The sequence spans 352 residues: DNA polymerase IV (352 aa).

One can recognise a UmuC domain in the interval 6-187 (IIHIDADCFY…VPVKFISGIG (182 aa)). Residues D10 and D105 each contribute to the Mg(2+) site. E106 is a catalytic residue.

The protein belongs to the DNA polymerase type-Y family. In terms of assembly, monomer. Mg(2+) is required as a cofactor.

It localises to the cytoplasm. The enzyme catalyses DNA(n) + a 2'-deoxyribonucleoside 5'-triphosphate = DNA(n+1) + diphosphate. Functionally, poorly processive, error-prone DNA polymerase involved in untargeted mutagenesis. Copies undamaged DNA at stalled replication forks, which arise in vivo from mismatched or misaligned primer ends. These misaligned primers can be extended by PolIV. Exhibits no 3'-5' exonuclease (proofreading) activity. May be involved in translesional synthesis, in conjunction with the beta clamp from PolIII. The polypeptide is DNA polymerase IV (Marinomonas sp. (strain MWYL1)).